Reading from the N-terminus, the 160-residue chain is Globin-like protein (160 aa).

Residues 2-152 (SMTRQEIQDL…FNAECQVHLK (151 aa)) form the Globin domain. A heme-binding site is contributed by H101.

This sequence belongs to the globin family.

The protein resides in the cytoplasm. May be a globin and may play a role in oxygen transport. This Caenorhabditis briggsae protein is Globin-like protein (glb-1).